Consider the following 223-residue polypeptide: Endonuclease V (223 aa).

Mg(2+) contacts are provided by Asp-44 and Asp-109.

The protein belongs to the endonuclease V family. Mg(2+) serves as cofactor.

The protein resides in the cytoplasm. It catalyses the reaction Endonucleolytic cleavage at apurinic or apyrimidinic sites to products with a 5'-phosphate.. Its function is as follows. DNA repair enzyme involved in the repair of deaminated bases. Selectively cleaves double-stranded DNA at the second phosphodiester bond 3' to a deoxyinosine leaving behind the intact lesion on the nicked DNA. The polypeptide is Endonuclease V (Methanothrix thermoacetophila (strain DSM 6194 / JCM 14653 / NBRC 101360 / PT) (Methanosaeta thermophila)).